We begin with the raw amino-acid sequence, 152 residues long: Neuropeptide W (152 aa).

The N-terminal stretch at 1-32 (MGARGPGPGATARRRLLALLLLLLLLPLPARA) is a signal peptide. A propeptide spanning residues 65–152 (ALRPAAGPLA…LGASSWTSAE (88 aa)) is cleaved from the precursor. Disordered stretches follow at residues 79 to 108 (GQDV…LPPG) and 122 to 152 (SGIP…TSAE). Residues 96–106 (GPAPRDAPLLP) are compositionally biased toward pro residues.

The protein belongs to the neuropeptide B/W family.

The protein resides in the secreted. Its function is as follows. Plays a regulatory role in the organization of neuroendocrine signals accessing the anterior pituitary gland. Stimulates water drinking and food intake. May play a role in the hypothalamic response to stress. The polypeptide is Neuropeptide W (NPW) (Sus scrofa (Pig)).